The chain runs to 284 residues: NAD kinase (284 aa).

Asp67 functions as the Proton acceptor in the catalytic mechanism. NAD(+)-binding positions include 67 to 68, 141 to 142, Arg152, Lys169, Asp171, 182 to 187, and Gln241; these read DG, ND, and TGYSLS.

This sequence belongs to the NAD kinase family. A divalent metal cation is required as a cofactor.

The protein localises to the cytoplasm. The enzyme catalyses NAD(+) + ATP = ADP + NADP(+) + H(+). In terms of biological role, involved in the regulation of the intracellular balance of NAD and NADP, and is a key enzyme in the biosynthesis of NADP. Catalyzes specifically the phosphorylation on 2'-hydroxyl of the adenosine moiety of NAD to yield NADP. This is NAD kinase from Geobacter sulfurreducens (strain ATCC 51573 / DSM 12127 / PCA).